The sequence spans 163 residues: Neurotrophin-3 (163 aa).

The first 3 residues, 1–3, serve as a signal peptide directing secretion; sequence IQS. The propeptide occupies 4–119; it reads TSMDQGILTE…VLNRTSRRKR (116 aa). Residue N112 is glycosylated (N-linked (GlcNAc...) asparagine).

It belongs to the NGF-beta family.

It localises to the secreted. In terms of biological role, seems to promote the survival of visceral and proprioceptive sensory neurons. This chain is Neurotrophin-3 (NTF3), found in Eryx conicus (Rough-scaled sand boa).